The primary structure comprises 243 residues: Probable enoyl-CoA hydratase echA6 (243 aa).

Belongs to the enoyl-CoA hydratase/isomerase family.

The enzyme catalyses a (3S)-3-hydroxyacyl-CoA = a (2E)-enoyl-CoA + H2O. The catalysed reaction is a 4-saturated-(3S)-3-hydroxyacyl-CoA = a (3E)-enoyl-CoA + H2O. In terms of biological role, could possibly oxidize fatty acids using specific components. This Mycobacterium bovis (strain ATCC BAA-935 / AF2122/97) protein is Probable enoyl-CoA hydratase echA6 (echA6).